Consider the following 417-residue polypeptide: Gamma-glutamyl phosphate reductase (417 aa).

This sequence belongs to the gamma-glutamyl phosphate reductase family.

Its subcellular location is the cytoplasm. The enzyme catalyses L-glutamate 5-semialdehyde + phosphate + NADP(+) = L-glutamyl 5-phosphate + NADPH + H(+). The protein operates within amino-acid biosynthesis; L-proline biosynthesis; L-glutamate 5-semialdehyde from L-glutamate: step 2/2. Catalyzes the NADPH-dependent reduction of L-glutamate 5-phosphate into L-glutamate 5-semialdehyde and phosphate. The product spontaneously undergoes cyclization to form 1-pyrroline-5-carboxylate. The chain is Gamma-glutamyl phosphate reductase from Sodalis glossinidius (strain morsitans).